The sequence spans 504 residues: Chorion-specific transcription factor GCMb (504 aa).

Residues 19 to 174 constitute a DNA-binding region (GCM); that stretch reads LTWDINDPQM…KSETEGRRSA (156 aa). Cys81, Cys87, Cys91, Cys118, Cys121, Cys130, His157, and His159 together coordinate Zn(2+). 2 stretches are compositionally biased toward basic and acidic residues: residues 155–172 and 188–203; these read GVHD…EGRR and RRSE…DIRG. Residues 155–203 are disordered; it reads GVHDHPRPESKSETEGRRSALKRQMASFYQPQKRRSEEPEARSTQDIRG. Residues 379–393 are C-terminal conserved inhibitory domain (CCID); it reads LQTVITTTVAYQAYQ. The interval 438-472 is disordered; it reads ASPSGRAPLKVPGDCQAPRPTLDFPQEADPSGTDG.

The protein resides in the nucleus. Transcription factor that binds specific sequences on gene promoters and activate their transcription. Through the regulation of gene transcription, may play a role in parathyroid gland development. This Mus musculus (Mouse) protein is Chorion-specific transcription factor GCMb.